Consider the following 418-residue polypeptide: METLGLPLPLFEKILFRLDPISLVMMKCTRRSFNSHISEDPYFKSKYLSGVRSGLLHISSFGSKNLFCNPFGDSSSSRHHDFLDITTRILGSCSGLLLLFIDGLCVANPLTKRYRFLNYSKSMFLSRVDRWGILNFDLPSEKMNRLGLAVDQITQRFKVVCMNETETSDPDETMYQFEILTGDSCWRLSATTITCSASVLIMDKKPVYFDGSVHWLRKDGSILSFNPETEQARLIPIKFPLELCAVANKFLFSATEKELAFISATEDLINVYALENALIDPKWALVKQIKNGVSENKKIRYWNVAAYDGKYLVLWEMYKDIYNGVVHGYDLRANKWGVLGSVPSWCDCSHSFYNFTPSPFSSTIELNKKVDVRMITTVRDDYNVRMITMVRDDKHISTLKKIMKLTDEISPCAKSRWH.

The region spanning 1–46 (METLGLPLPLFEKILFRLDPISLVMMKCTRRSFNSHISEDPYFKSK) is the F-box domain.

This is Putative F-box protein At1g20795 from Arabidopsis thaliana (Mouse-ear cress).